Here is a 1036-residue protein sequence, read N- to C-terminus: Multidrug resistance protein MdtC (1036 aa).

The next 10 helical transmembrane spans lie at 12–34 (VATT…LLPV), 336–353 (RALV…FLFL), 360–382 (LIPA…LCGF), 431–450 (VGFT…IPLL), 463–485 (FAIT…TPMM), 528–547 (WVLL…YINI), 853–875 (LFLI…ESYI), 895–917 (LELF…IGIV), 949–971 (LRFR…LVLS), and 986–1008 (IVGG…YLCF).

This sequence belongs to the resistance-nodulation-cell division (RND) (TC 2.A.6) family. MdtC subfamily. Part of a tripartite efflux system composed of MdtA, MdtB and MdtC. MdtC forms a heteromultimer with MdtB.

It localises to the cell inner membrane. This Photorhabdus laumondii subsp. laumondii (strain DSM 15139 / CIP 105565 / TT01) (Photorhabdus luminescens subsp. laumondii) protein is Multidrug resistance protein MdtC.